The following is a 277-amino-acid chain: Transmembrane protein 53 (277 aa).

A helical membrane pass occupies residues 171–191 (LLLLVAFALVVVLFHVLLAPI).

Belongs to the TMEM53 family. In terms of tissue distribution, widely expressed.

The protein resides in the nucleus outer membrane. Its function is as follows. Ensures normal bone formation, through the negative regulation of bone morphogenetic protein (BMP) signaling in osteoblast lineage cells by blocking cytoplasm-nucleus translocation of phosphorylated SMAD1/5/9 proteins. The protein is Transmembrane protein 53 (TMEM53) of Homo sapiens (Human).